The chain runs to 436 residues: Histidinol dehydrogenase (436 aa).

NAD(+) is bound by residues Tyr-136, Gln-198, and Asn-221. Substrate-binding residues include Ser-244, Gln-266, and His-269. Zn(2+) is bound by residues Gln-266 and His-269. Catalysis depends on proton acceptor residues Glu-334 and His-335. Substrate contacts are provided by His-335, Asp-368, Glu-422, and His-427. Position 368 (Asp-368) interacts with Zn(2+). Residue His-427 coordinates Zn(2+).

This sequence belongs to the histidinol dehydrogenase family. Requires Zn(2+) as cofactor.

The enzyme catalyses L-histidinol + 2 NAD(+) + H2O = L-histidine + 2 NADH + 3 H(+). It participates in amino-acid biosynthesis; L-histidine biosynthesis; L-histidine from 5-phospho-alpha-D-ribose 1-diphosphate: step 9/9. Functionally, catalyzes the sequential NAD-dependent oxidations of L-histidinol to L-histidinaldehyde and then to L-histidine. In Dehalococcoides mccartyi (strain ATCC BAA-2266 / KCTC 15142 / 195) (Dehalococcoides ethenogenes (strain 195)), this protein is Histidinol dehydrogenase.